Reading from the N-terminus, the 568-residue chain is Urease subunit alpha (568 aa).

Residues 131 to 568 enclose the Urease domain; the sequence is GGIDTHIHFI…LPMAQRYFLF (438 aa). 3 residues coordinate Ni(2+): histidine 136, histidine 138, and lysine 219. An N6-carboxylysine modification is found at lysine 219. Residue histidine 221 participates in substrate binding. Histidine 248 and histidine 274 together coordinate Ni(2+). Histidine 322 (proton donor) is an active-site residue. Residue aspartate 362 participates in Ni(2+) binding.

The protein belongs to the metallo-dependent hydrolases superfamily. Urease alpha subunit family. In terms of assembly, heterotrimer of UreA (gamma), UreB (beta) and UreC (alpha) subunits. Three heterotrimers associate to form the active enzyme. Ni cation serves as cofactor. In terms of processing, carboxylation allows a single lysine to coordinate two nickel ions.

The protein resides in the cytoplasm. It catalyses the reaction urea + 2 H2O + H(+) = hydrogencarbonate + 2 NH4(+). Its pathway is nitrogen metabolism; urea degradation; CO(2) and NH(3) from urea (urease route): step 1/1. The chain is Urease subunit alpha from Nostoc sp. (strain PCC 7120 / SAG 25.82 / UTEX 2576).